The following is a 305-amino-acid chain: Spermatogenesis-associated protein 4 (305 aa).

The Calponin-homology (CH) domain occupies 49–155 (SRLSRSVLRW…EEVYTLLTHR (107 aa)).

It localises to the nucleus. In terms of biological role, may play a role in apoptosis regulation. In Pan troglodytes (Chimpanzee), this protein is Spermatogenesis-associated protein 4 (SPATA4).